A 501-amino-acid chain; its full sequence is Splicing factor 3A subunit 3 (501 aa).

The residue at position 1 (M1) is an N-acetylmethionine. Phosphoserine occurs at positions 54 and 121. The Nuclear localization signal motif lies at 175 to 179; the sequence is KERKN. 2 positions are modified to phosphoserine: S295 and S299. A compositionally biased stretch (basic and acidic residues) spans 343 to 354; that stretch reads ENVQRKQARTGE. A disordered region spans residues 343 to 374; sequence ENVQRKQARTGEEREEEEEEQISESESEDEEN. Positions 355–374 are enriched in acidic residues; sequence EREEEEEEQISESESEDEEN. Residues S365, S367, and S369 each carry the phosphoserine modification. The Matrin-type zinc-finger motif lies at 406-437; sequence YNCEICGNYTYRGPKAFQRHFAEWRHAHGMRC. At T475 the chain carries Phosphothreonine.

It belongs to the SF3A3 family. Component of the 17S U2 SnRNP complex, a ribonucleoprotein complex that contains small nuclear RNA (snRNA) U2 and a number of specific proteins. Part of the SF3A subcomplex of the 17S U2 SnRNP complex which is composed of three subunits; SF3A3/SAP61, SF3A2/SAP62 and SF3A1/SAP114. SF3A associates with the splicing factor SF3B and a 12S RNA unit to form the mature 17S U2 small nuclear ribonucleoprotein complex (17S U2 snRNP). Identified in the spliceosome 'E' complex, a precursor of the spliceosome 'A' complex. Identified in the spliceosome 'A' and 'B' complexes. Identified in the spliceosome 'C' complex. Ubiquitous.

It localises to the nucleus speckle. Its subcellular location is the nucleus. Functionally, component of the 17S U2 SnRNP complex of the spliceosome, a large ribonucleoprotein complex that removes introns from transcribed pre-mRNAs. The 17S U2 SnRNP complex (1) directly participates in early spliceosome assembly and (2) mediates recognition of the intron branch site during pre-mRNA splicing by promoting the selection of the pre-mRNA branch-site adenosine, the nucleophile for the first step of splicing. Within the 17S U2 SnRNP complex, SF3A3 is part of the SF3A subcomplex that contributes to the assembly of the 17S U2 snRNP, and the subsequent assembly of the pre-spliceosome 'E' complex and the pre-catalytic spliceosome 'A' complex. Involved in pre-mRNA splicing as a component of pre-catalytic spliceosome 'B' complexes. The protein is Splicing factor 3A subunit 3 (SF3A3) of Homo sapiens (Human).